A 238-amino-acid chain; its full sequence is Uracil-DNA glycosylase (238 aa).

Catalysis depends on aspartate 81, which acts as the Proton acceptor.

This sequence belongs to the uracil-DNA glycosylase (UDG) superfamily. UNG family.

It localises to the cytoplasm. The enzyme catalyses Hydrolyzes single-stranded DNA or mismatched double-stranded DNA and polynucleotides, releasing free uracil.. Functionally, excises uracil residues from the DNA which can arise as a result of misincorporation of dUMP residues by DNA polymerase or due to deamination of cytosine. This is Uracil-DNA glycosylase from Corynebacterium efficiens (strain DSM 44549 / YS-314 / AJ 12310 / JCM 11189 / NBRC 100395).